The sequence spans 128 residues: Sulfurtransferase TusD (128 aa).

The active-site Cysteine persulfide intermediate is Cys78.

Belongs to the DsrE/TusD family. Heterohexamer, formed by a dimer of trimers. The hexameric TusBCD complex contains 2 copies each of TusB, TusC and TusD. The TusBCD complex interacts with TusE.

The protein localises to the cytoplasm. In terms of biological role, part of a sulfur-relay system required for 2-thiolation of 5-methylaminomethyl-2-thiouridine (mnm(5)s(2)U) at tRNA wobble positions. Accepts sulfur from TusA and transfers it in turn to TusE. In Escherichia coli O7:K1 (strain IAI39 / ExPEC), this protein is Sulfurtransferase TusD.